We begin with the raw amino-acid sequence, 207 residues long: Small ribosomal subunit protein uS4 (207 aa).

The S4 RNA-binding domain maps to 96 to 156; the sequence is SRLDNTVYRM…KKSHKQSRIR (61 aa).

Belongs to the universal ribosomal protein uS4 family. In terms of assembly, part of the 30S ribosomal subunit. Contacts protein S5. The interaction surface between S4 and S5 is involved in control of translational fidelity.

Its function is as follows. One of the primary rRNA binding proteins, it binds directly to 16S rRNA where it nucleates assembly of the body of the 30S subunit. Functionally, with S5 and S12 plays an important role in translational accuracy. This is Small ribosomal subunit protein uS4 from Blochmanniella pennsylvanica (strain BPEN).